A 217-amino-acid polypeptide reads, in one-letter code: External core antigen (217 aa).

Residues 1 to 20 (MYLFHLCLVFACVPCPTVQA) form the signal peptide. The HBEAG stretch occupies residues 26–28 (GWL). Residues 166–217 (APILSTLPEHTVIRRRGGSRAARSPRRRTPSPRRRRSQSPRRRRSQSPASNC) form a disordered region. Over residues 178–210 (IRRRGGSRAARSPRRRTPSPRRRRSQSPRRRRS) the composition is skewed to basic residues. A 1; half-length repeat occupies 189–195 (SPRRRTP). Positions 189–211 (SPRRRTPSPRRRRSQSPRRRRSQ) are 3 X 8 AA repeats of S-P-R-R-R-R-S-Q. A propeptide spanning residues 189 to 217 (SPRRRTPSPRRRRSQSPRRRRSQSPASNC) is cleaved from the precursor. 2 tandem repeats follow at residues 196–203 (SPRRRRSQ) and 204–211 (SPRRRRSQ).

The protein belongs to the orthohepadnavirus precore antigen family. As to quaternary structure, homodimerizes. In terms of processing, phosphorylated. Cleaved by host furin.

It is found in the secreted. The protein localises to the host nucleus. Functionally, may regulate immune response to the intracellular capsid in acting as a T-cell tolerogen, by having an immunoregulatory effect which prevents destruction of infected cells by cytotoxic T-cells. This immune regulation may predispose to chronicity during perinatal infections and prevent severe liver injury during adult infections. The polypeptide is External core antigen (Otospermophilus beecheyi (California ground squirrel)).